The chain runs to 117 residues: UPF0251 protein DehaBAV1_0135 (117 aa).

This sequence belongs to the UPF0251 family.

This is UPF0251 protein DehaBAV1_0135 from Dehalococcoides mccartyi (strain ATCC BAA-2100 / JCM 16839 / KCTC 5957 / BAV1).